Reading from the N-terminus, the 143-residue chain is Sirohydrochlorin cobaltochelatase (143 aa).

The active-site Proton acceptor is H9. Position 9 (H9) interacts with Co(2+). H9 contributes to the Ni(2+) binding site. Residues E45 and L70–H75 each bind substrate. H75 contributes to the Co(2+) binding site. H75 lines the Ni(2+) pocket.

This sequence belongs to the CbiX family. CbiXS subfamily. Homotetramer; dimer of dimers.

The catalysed reaction is Co-sirohydrochlorin + 2 H(+) = sirohydrochlorin + Co(2+). The enzyme catalyses Ni-sirohydrochlorin + 2 H(+) = sirohydrochlorin + Ni(2+). It functions in the pathway cofactor biosynthesis; adenosylcobalamin biosynthesis; cob(II)yrinate a,c-diamide from sirohydrochlorin (anaerobic route): step 1/10. Catalyzes the insertion of Co(2+) into sirohydrochlorin as part of the anaerobic pathway to cobalamin biosynthesis. Involved in the biosynthesis of the unique nickel-containing tetrapyrrole coenzyme F430, the prosthetic group of methyl-coenzyme M reductase (MCR), which plays a key role in methanogenesis and anaerobic methane oxidation. Catalyzes the insertion of Ni(2+) into sirohydrochlorin to yield Ni-sirohydrochlorin. This is Sirohydrochlorin cobaltochelatase from Methanopyrus kandleri (strain AV19 / DSM 6324 / JCM 9639 / NBRC 100938).